Here is a 417-residue protein sequence, read N- to C-terminus: MNEADVTKFVNNARKTLTDAQLLCSSANLRIVDIKKKLSSWQLSISKLNFLIVGLRQQGKFLYTILKEGIGTKLIQKQWNQAVLVVLVDEMKYWQYEITSKVQRLDGIVNELSISEKDDTDPSKLGDYISRDNVNLLNDKLKEVPVIERQIENIKLQYENMVRKVNKELIDTKLTDVTQKFQSKFGIDNLMETNVAEQFSRELTDLEKDLAEIMNSLTQHFDKTLLLQDKKIDNDEREELFKVVQGDDKELYNIFKTLHEVIDDVDKTILNLGQFLQAKIKEKTELHSEVSEIINDFNRNLEYLLIFKDISNLIDSFKNSCTQDIQTTKELCEFYDNFEESYGNLVLEAKRRKDVANRMKTILKDCEKQLQNLDAQDQEERQNFIAENGTYLPETIWPGKIDDFSSLYTLNYNVKNP.

Coiled coils occupy residues Val-146–Phe-221 and Lys-353–Phe-384.

This sequence belongs to the ATG17 family. As to quaternary structure, forms a complex with ATG13, ATG29 and CIS1/ATG31. The ATG17-ATG29-ATG31 complex interacts with the ATG1-ATG13 complex. Forms a complex with SNX4 and ATG20. Interacts with ATG11 and the conserved oligomeric Golgi (COG) complex subunits COG1, COG3 and COG4. Interacts with ATG9 (via N-terminus); required for recruitment to the PAS during autophagy and starved conditions.

Its subcellular location is the cytoplasm. It localises to the preautophagosomal structure membrane. Functionally, autophagy-specific protein that functions with ATG13, ATG29, and CIS1/ATG31 in response to autophagy-inducing signals as a scaffold to recruit other ATG proteins to organize pre-autophagosomal structure (PAS) formation. Modulates the timing and magnitude of the autophagy response, such as the size of the sequestering vesicles, through interacting with and regulating ATG1 kinase activity. Plays particularly a role in pexophagy and nucleophagy. With ATG13, is required for ATG1 activation by autophosphorylation of 'Thr-226'. Recruits ATG9 to the pre-autophagosomal structure. Also plays a role in regulation of filamentous growth. The polypeptide is Autophagy-related protein 17 (ATG17) (Saccharomyces cerevisiae (strain ATCC 204508 / S288c) (Baker's yeast)).